We begin with the raw amino-acid sequence, 263 residues long: L-histidine 2-aminobutanoyltransferase (263 aa).

It belongs to the methyltransferase superfamily. CntL family. In terms of assembly, interacts with CntM.

It carries out the reaction L-histidine + S-adenosyl-L-methionine = (2S)-2-amino-4-{[(1S)-1-carboxy-2-(1H-imidazol-4-yl)ethyl]amino}butanoate + S-methyl-5'-thioadenosine + H(+). Functionally, catalyzes the nucleophilic attack of one alpha-aminobutanoate moiety from SAM onto L-histidine to produce the intermediate (2S)-2-amino-4-{[(1S)-1-carboxy-2-(1H-imidazol-4-yl)ethyl]amino}butanoate. Functions in the biosynthesis of the metallophore pseudopaline, which is involved in the acquisition of nickel and zinc, and thus enables bacterial growth inside the host, where metal access is limited. Therefore, this enzyme probably contributes to Pseudomonas virulence. Cannot use D-histidine in place of L-histidine as substrate. The chain is L-histidine 2-aminobutanoyltransferase from Pseudomonas aeruginosa (strain UCBPP-PA14).